We begin with the raw amino-acid sequence, 366 residues long: Growth hormone secretagogue receptor type 1 (366 aa).

At 1 to 40 (MWNATPSEEPGSNLTRAELGWDAPPGNDSLADELLQLFPA) the chain is on the extracellular side. N-linked (GlcNAc...) asparagine glycosylation is found at N13 and N27. Residues 41–66 (PLLAGVTATCVALFVVGIAGNLLTML) form a helical membrane-spanning segment. At 67–72 (VVSRFR) the chain is on the cytoplasmic side. Residues 73–96 (ELRTTTNLYLSSMAFSDLLIFLCM) form a helical membrane-spanning segment. Residues 97–117 (PLDLVRLWQYRPWNFGDLLCK) lie on the Extracellular side of the membrane. C116 and C198 are joined by a disulfide. A helical membrane pass occupies residues 118 to 139 (LFQFVSESCTYATVLTITALSV). Over 140–162 (ERYFAICFPLRAKVVVTKGRVKL) the chain is Cytoplasmic. Residues 163–183 (VILVIWALAFCSAGPIFVLVG) traverse the membrane as a helical segment. Over 184-211 (VEHENGTDPQDTNECRATEFAVRSGLLT) the chain is Extracellular. The N-linked (GlcNAc...) asparagine glycan is linked to N188. A helical membrane pass occupies residues 212–235 (IMVWVSSVFFFLPVFCLTVLYSLI). Residues 236-263 (GRKLWRRKRGDGAVGSSLRDQNHRQTVK) are Cytoplasmic-facing. The chain crosses the membrane as a helical span at residues 264-285 (MLAVVVFAFILCWLPFHVGRYL). Over 286–302 (FSKSFEPGSLEIAQISQ) the chain is Extracellular. Residues 303–326 (YCNLVSFVLFYLSAAINPILYNIM) form a helical membrane-spanning segment. At 327–366 (SKKYRVAVFKLLGFEPFSQRKLSTLKDESSRAWTKSSINT) the chain is on the cytoplasmic side.

The protein belongs to the G-protein coupled receptor 1 family.

The protein localises to the cell membrane. Its function is as follows. Receptor for ghrelin, coupled to G-alpha-11 proteins. Stimulates growth hormone secretion. Also binds other growth hormone releasing peptides (GHRP) (e.g. Met-enkephalin and GHRP-6) as well as non-peptide, low molecular weight secretagogues (e.g. L-692,429, MK-0677, adenosine). The sequence is that of Growth hormone secretagogue receptor type 1 (GHSR) from Oryctolagus cuniculus (Rabbit).